A 314-amino-acid polypeptide reads, in one-letter code: Probable cell division protein WhiA (314 aa).

A DNA-binding region (H-T-H motif) is located at residues 282–314 (SLKELGELCRPPVSKSGAAHRMRQLMALAESLE).

This sequence belongs to the WhiA family.

Involved in cell division and chromosome segregation. This is Probable cell division protein WhiA from Symbiobacterium thermophilum (strain DSM 24528 / JCM 14929 / IAM 14863 / T).